Here is an 812-residue protein sequence, read N- to C-terminus: Probable phosphoketolase (812 aa).

Belongs to the XFP family. Requires thiamine diphosphate as cofactor.

This chain is Probable phosphoketolase, found in Thermosynechococcus vestitus (strain NIES-2133 / IAM M-273 / BP-1).